Here is a 285-residue protein sequence, read N- to C-terminus: uncharacterized protein (285 aa).

6 helical membrane passes run 7–29, 49–71, 95–117, 137–156, 232–254, and 259–281; these read FYRL…LTLQ, LVVW…STFF, IFLY…SNTL, FFSE…VLHA, KVVN…TVAL, and GGLS…IFVV.

The protein resides in the cell membrane. This is an uncharacterized protein from Aquifex aeolicus (strain VF5).